The primary structure comprises 394 residues: Aspergillopepsin-1 (394 aa).

An N-terminal signal peptide occupies residues 1 to 20; that stretch reads MVVFSKTAALVLGLSTAVSA. Residues 21–69 constitute a propeptide, activation peptide; it reads APAPTRKGFTINQIARPANKTRTVNLPGLYARSLAKFGGTVPQSVKEAA. The region spanning 85-391 is the Peptidase A1 domain; that stretch reads YLTPVTVGKS…NSEGPKLGFA (307 aa). The active site involves aspartate 101. Residues serine 129 and serine 304 are each glycosylated (O-linked (Man...) serine). Cysteine 319 and cysteine 354 form a disulfide bridge.

Belongs to the peptidase A1 family. As to quaternary structure, monomer.

The protein localises to the secreted. It carries out the reaction Hydrolysis of proteins with broad specificity. Generally favors hydrophobic residues in P1 and P1', but also accepts Lys in P1, which leads to activation of trypsinogen. Does not clot milk.. Functionally, secreted aspartic endopeptidase that allows assimilation of proteinaceous substrates. The scissile peptide bond is attacked by a nucleophilic water molecule activated by two aspartic residues in the active site. Shows a broad primary substrate specificity. Favors hydrophobic residues at the P1 and P1' positions, but also accepts a lysine residue in the P1 position, leading to the activation of trypsinogen and chymotrypsinogen A. This chain is Aspergillopepsin-1 (pepA), found in Aspergillus phoenicis (Aspergillus saitoi).